A 1447-amino-acid polypeptide reads, in one-letter code: Bud site selection protein 4 (1447 aa).

The span at 1 to 16 (MHDAESTVDSLLKEID) shows a compositional bias: basic and acidic residues. Disordered stretches follow at residues 1–38 (MHDAESTVDSLLKEIDNEMEQTKSNITQNGSEDTPHNW) and 57–76 (NTRSNATENSRGRSPSKMST). At Ser10 the chain carries Phosphoserine. 2 stretches are compositionally biased toward polar residues: residues 22–32 (TKSNITQNGSE) and 59–76 (RSNATENSRGRSPSKMST). Ser78, Ser81, Ser91, Ser96, and Ser167 each carry phosphoserine. The tract at residues 272–316 (NLPSKLLNTSNNSHSDSRSPTASVEDLNISTNLPGADSSQNNPVT) is disordered. A compositionally biased stretch (polar residues) spans 277–316 (LLNTSNNSHSDSRSPTASVEDLNISTNLPGADSSQNNPVT). Thr365 carries the phosphothreonine modification. Ser367 carries the phosphoserine modification. Positions 444–479 (HQESEHANEQPAIIPQKDSSEETFTELNNESEFQRN) are disordered. A Phosphoserine modification is found at Ser511. The tract at residues 529 to 591 (KTSAEEHDLS…NEEPEHVPLL (63 aa)) is disordered. The span at 538–548 (SSSCEDQSVSE) shows a compositional bias: polar residues. The span at 549–580 (ARNKDRIEEKEVETKDENIETEKDESEYHKVE) shows a compositional bias: basic and acidic residues. The residue at position 616 (Ser616) is a Phosphoserine. A compositionally biased stretch (polar residues) spans 648 to 664 (ANSQFSQQSSITTASTV). Residues 648 to 673 (ANSQFSQQSSITTASTVDSKKDNGST) form a disordered region. An interaction with IQG1 region spans residues 768 to 879 (EHENIPLSTH…SLWESSYELK (112 aa)). Phosphoserine is present on residues Ser805 and Ser811. Residues 1302-1413 (NIYKEGYLLQ…WYNKLQEVVE (112 aa)) enclose the PH domain.

As to quaternary structure, interacts with AXL1, AXL2, IQG1 and SEC3. In terms of processing, phosphorylated by CDC28.

It is found in the bud neck. Functionally, required for establishment of the axial budding pattern in haploid cells. Cooperates with other bud site selection proteins to recognize a spatial landmark during mitosis and they subsequently become a landmark for downstream polarity establishment factors that coordinate axial budding and cytokinesis. Involved in the septin organization at the bud neck. This Saccharomyces cerevisiae (strain ATCC 204508 / S288c) (Baker's yeast) protein is Bud site selection protein 4 (BUD4).